The primary structure comprises 436 residues: UPF0597 protein YhaM (436 aa).

It belongs to the UPF0597 family.

This chain is UPF0597 protein YhaM, found in Salmonella paratyphi B (strain ATCC BAA-1250 / SPB7).